The following is a 525-amino-acid chain: 2-isopropylmalate synthase (525 aa).

The Pyruvate carboxyltransferase domain occupies 12–274; that stretch reads VVIFDTTLRD…WNKIDTTQLT (263 aa). Residues aspartate 21, histidine 209, histidine 211, and asparagine 245 each coordinate Mn(2+). Positions 398–525 are regulatory domain; it reads KLLSLSVIAG…GHGASAAAAS (128 aa).

The protein belongs to the alpha-IPM synthase/homocitrate synthase family. LeuA type 1 subfamily. Homodimer. Requires Mn(2+) as cofactor.

The protein localises to the cytoplasm. The enzyme catalyses 3-methyl-2-oxobutanoate + acetyl-CoA + H2O = (2S)-2-isopropylmalate + CoA + H(+). Its pathway is amino-acid biosynthesis; L-leucine biosynthesis; L-leucine from 3-methyl-2-oxobutanoate: step 1/4. Its function is as follows. Catalyzes the condensation of the acetyl group of acetyl-CoA with 3-methyl-2-oxobutanoate (2-ketoisovalerate) to form 3-carboxy-3-hydroxy-4-methylpentanoate (2-isopropylmalate). The sequence is that of 2-isopropylmalate synthase from Bradyrhizobium sp. (strain ORS 278).